The chain runs to 141 residues: ATP synthase epsilon chain (141 aa).

It belongs to the ATPase epsilon chain family. As to quaternary structure, F-type ATPases have 2 components, CF(1) - the catalytic core - and CF(0) - the membrane proton channel. CF(1) has five subunits: alpha(3), beta(3), gamma(1), delta(1), epsilon(1). CF(0) has three main subunits: a, b and c.

It localises to the cell inner membrane. In terms of biological role, produces ATP from ADP in the presence of a proton gradient across the membrane. This Hahella chejuensis (strain KCTC 2396) protein is ATP synthase epsilon chain.